Consider the following 284-residue polypeptide: 4-diphosphocytidyl-2-C-methyl-D-erythritol kinase (284 aa).

Lys-14 is an active-site residue. 98–108 is a binding site for ATP; that stretch reads PMGGGLGGGSS. Residue Asp-140 is part of the active site.

It belongs to the GHMP kinase family. IspE subfamily.

The catalysed reaction is 4-CDP-2-C-methyl-D-erythritol + ATP = 4-CDP-2-C-methyl-D-erythritol 2-phosphate + ADP + H(+). Its pathway is isoprenoid biosynthesis; isopentenyl diphosphate biosynthesis via DXP pathway; isopentenyl diphosphate from 1-deoxy-D-xylulose 5-phosphate: step 3/6. In terms of biological role, catalyzes the phosphorylation of the position 2 hydroxy group of 4-diphosphocytidyl-2C-methyl-D-erythritol. In Shewanella pealeana (strain ATCC 700345 / ANG-SQ1), this protein is 4-diphosphocytidyl-2-C-methyl-D-erythritol kinase.